The primary structure comprises 920 residues: Protein O-mannosyl-transferase TMTC3 (920 aa).

The Cytoplasmic segment spans residues 1-14; the sequence is MLEGKMADINFKEV. A helical membrane pass occupies residues 15–35; that stretch reads TLIVSVVAACYWNSLFCGFVF. The Extracellular segment spans residues 36–94; the sequence is DDVSAILDNKDLHPSTPLKTLFQNDFWGTPMSEERSHKSYRPLTVLTFRLNYLLSELKP. The helical transmembrane segment at 95–115 threads the bilayer; sequence MSYHLLNTVFHAVVSVIFLKV. Over 116–125 the chain is Cytoplasmic; sequence CRLFLDKRSS. Transmembrane regions (helical) follow at residues 126–144 and 145–163; these read MIAA…AVTG and VVGR…AFLS. Topologically, residues 164 to 171 are cytoplasmic; sequence YTKSKGPD. Residues 172–192 form a helical membrane-spanning segment; it reads NSIVWTPIVLTVFLVAVATLC. Over 193-198 the chain is Extracellular; it reads KEQGIT. Residues 199–219 form a helical membrane-spanning segment; it reads VVGICCVYEVFVAQGYTLPML. Residues 220–236 are Cytoplasmic-facing; that stretch reads CTVAGQFLRGKGSIPLS. A helical transmembrane segment spans residues 237–257; sequence MLQTLVKLIVLMLSTLLLVVV. Over 258-325 the chain is Extracellular; sequence RVQVIQSQLP…LIESFLDVRN (68 aa). A helical membrane pass occupies residues 326–346; it reads LATFAFFCFLGALGIFSLRYP. Topologically, residues 347–358 are cytoplasmic; that stretch reads GDSSKTVLMALC. A helical membrane pass occupies residues 359–379; it reads LMALPFIPASNLFFPVGFVVA. Residues 380-381 are Extracellular-facing; the sequence is ER. A helical transmembrane segment spans residues 382 to 402; that stretch reads VLYVPSMGFCILVAHGWQKIS. Topologically, residues 403-409 are cytoplasmic; that stretch reads NKSVLKK. Residues 410-428 form a helical membrane-spanning segment; it reads LSWVCLSMVILTHALKTLH. Residues 429–920 are Extracellular-facing; that stretch reads RNWDWESEYT…EEIERILNGE (492 aa). TPR repeat units lie at residues 451 to 484, 485 to 518, 534 to 567, 568 to 601, 602 to 635, 673 to 706, 707 to 740, 742 to 775, and 776 to 809; these read AKLW…QPDD, IGAH…MPQI, NVYI…RPDF, KQAY…DRNN, ADLW…NPKH, ANGY…QPDF, RSAL…YPDH, KGLI…DPSN, and VQGK…APHE. N-linked (GlcNAc...) asparagine glycosylation is present at Asn-499. Residue Tyr-508 is modified to Phosphotyrosine. Asn-546 carries an N-linked (GlcNAc...) asparagine glycan. A disordered region spans residues 829 to 897; the sequence is VEQPLAPADK…APHKTTKDIK (69 aa). Positions 840 to 858 are enriched in basic and acidic residues; the sequence is PGTEEREEIPSEDVKEISS. The segment covering 867-880 has biased composition (low complexity); that stretch reads KTNNNRNSKSNKQS. A compositionally biased stretch (basic and acidic residues) spans 887–897; it reads DAPHKTTKDIK.

The protein belongs to the TMTC family.

It localises to the membrane. Its subcellular location is the endoplasmic reticulum. The catalysed reaction is a di-trans,poly-cis-dolichyl beta-D-mannosyl phosphate + L-seryl-[protein] = 3-O-(alpha-D-mannosyl)-L-seryl-[protein] + a di-trans,poly-cis-dolichyl phosphate + H(+). It carries out the reaction a di-trans,poly-cis-dolichyl beta-D-mannosyl phosphate + L-threonyl-[protein] = 3-O-(alpha-D-mannosyl)-L-threonyl-[protein] + a di-trans,poly-cis-dolichyl phosphate + H(+). It functions in the pathway protein modification; protein glycosylation. Its function is as follows. Transfers mannosyl residues to the hydroxyl group of serine or threonine residues. The 4 members of the TMTC family are O-mannosyl-transferases dedicated primarily to the cadherin superfamily, each member seems to have a distinct role in decorating the cadherin domains with O-linked mannose glycans at specific regions. Also acts as O-mannosyl-transferase on other proteins such as PDIA3. Involved in the positive regulation of proteasomal protein degradation in the endoplasmic reticulum (ER), and the control of ER stress response. The polypeptide is Protein O-mannosyl-transferase TMTC3 (Mus musculus (Mouse)).